A 537-amino-acid polypeptide reads, in one-letter code: MQTHLLILAAVVLLIIHIVNNFLIKPLQTLLKSRRLGCGPVPFEPTRWPLDIDTIRRSLKADKEQRTPDFVAGRFETMGRYTWGLSLLGTSNLITAEPRNVQALLATQFDDFIMGTARRTNLKTALGRSIFAVDGKAWHRARETMRPIFSRENVSRLELLEEHVQTMLQIIETKDEGLTTDANDRAWSAPVSLAVLLPRLTMDSATELFLGQSTHSLKKALARQQQKSGNEEHDADSFDHAFERMLAILGTRMRLRSLYWLYGNKELQKCINALHAFVDSAIDAADQARKSGSSQLRYDFLETLRTRCSDRAEVREQVLGLLAAGRDTTASLTAWVFYCLVRNPRVYKKLRDTVLAEFGPYSTNPGQKITFEKLKGCTYLQHVLNETLRLHSVVPFNSRCAARDTTLPVGGGPDGSMPVFVPKGTEVNFSTHVLHRRKDLWGEDADEFVPERWEKKRPGMTWQYVPFNGGPRICIGQQFALTEAGYVLVRMVQRYDVIEGLDIDVERDWHNFTVVCSPGSPVARDAAVMCRLRVAVE.

Residues 4-24 form a helical membrane-spanning segment; sequence HLLILAAVVLLIIHIVNNFLI. Position 474 (Cys-474) interacts with heme.

Belongs to the cytochrome P450 family. Heme is required as a cofactor.

It is found in the membrane. The protein operates within secondary metabolite biosynthesis. Its function is as follows. Cytochrome P450 monooxygenase; part of the gene cluster that mediates the biosynthesis of alternapyrone derivatives. Alternapyrone is a decaketide with octa-methylation from methionine on every C2 unit except the third unit. All the domains in the polyketide synthase alt5 are apparently involved in alternapyrone synthesis, that is, the 8 CMeT, 7 KR, 7 DH, and 4 ER reactions in the 9 KS-mediated condensation steps required for alternapyrone synthesis. the alternapyrone produced by alt5 might be intensively modified by cytochrome P450 monooxygenases alt1, alt2 and alt3 and FAD-dependent oxidoreductase alt4 present in the alt gene cluster. The protein is Cytochrome P450 monooxygenase alt2 of Alternaria solani.